A 203-amino-acid polypeptide reads, in one-letter code: Holliday junction branch migration complex subunit RuvA (203 aa).

The domain I stretch occupies residues 1–63; sequence MIFSVRGEVL…EDSMTLYGFS (63 aa). Residues 64–141 form a domain II region; that stretch reads DAENRDLFLA…GPVGASGLTV (78 aa). The segment at 141-145 is flexible linker; that stretch reads VGTAA. Residues 146-203 form a domain III region; it reads DGNAVRGSVVEALVGLGFAAKQAEEATDQVLDGELGKDGAVATSSALRAALSLLGKTR.

The protein belongs to the RuvA family. Homotetramer. Forms an RuvA(8)-RuvB(12)-Holliday junction (HJ) complex. HJ DNA is sandwiched between 2 RuvA tetramers; dsDNA enters through RuvA and exits via RuvB. An RuvB hexamer assembles on each DNA strand where it exits the tetramer. Each RuvB hexamer is contacted by two RuvA subunits (via domain III) on 2 adjacent RuvB subunits; this complex drives branch migration. In the full resolvosome a probable DNA-RuvA(4)-RuvB(12)-RuvC(2) complex forms which resolves the HJ.

It is found in the cytoplasm. Functionally, the RuvA-RuvB-RuvC complex processes Holliday junction (HJ) DNA during genetic recombination and DNA repair, while the RuvA-RuvB complex plays an important role in the rescue of blocked DNA replication forks via replication fork reversal (RFR). RuvA specifically binds to HJ cruciform DNA, conferring on it an open structure. The RuvB hexamer acts as an ATP-dependent pump, pulling dsDNA into and through the RuvAB complex. HJ branch migration allows RuvC to scan DNA until it finds its consensus sequence, where it cleaves and resolves the cruciform DNA. This chain is Holliday junction branch migration complex subunit RuvA, found in Mycobacterium leprae (strain Br4923).